Consider the following 206-residue polypeptide: Probable glutathione S-transferase 7 (206 aa).

One can recognise a GST N-terminal domain in the interval 2-79 (VHYKVSYFPI…YLARQFGING (78 aa)). Glutathione is bound by residues Tyr8, Trp39, Lys43, 49-51 (GQL), and 63-64 (QS). Positions 81–206 (CAWEEAQVNS…WLETRPVTPF (126 aa)) constitute a GST C-terminal domain.

This sequence belongs to the GST superfamily. Sigma family.

It carries out the reaction RX + glutathione = an S-substituted glutathione + a halide anion + H(+). Conjugation of reduced glutathione to a wide number of exogenous and endogenous hydrophobic electrophiles. May play a role in the detoxification of reactive oxygen species produced during pathogenic bacterial infection. The sequence is that of Probable glutathione S-transferase 7 (gst-7) from Caenorhabditis elegans.